The sequence spans 537 residues: Extracellular exo-inulinase inuE (537 aa).

The N-terminal stretch at 1–19 (MARLLKAVTVCALAGIAHA) is a signal peptide. D41 is an active-site residue. 8 N-linked (GlcNAc...) asparagine glycosylation sites follow: N49, N67, N112, N300, N363, N398, N430, and N531.

Belongs to the glycosyl hydrolase 32 family.

It is found in the secreted. It carries out the reaction Hydrolysis of terminal, non-reducing (2-&gt;1)- and (2-&gt;6)-linked beta-D-fructofuranose residues in fructans.. With respect to regulation, the catalytic activity is increased by manganese cathions, but strongly inhibited by other metal ions such as copper, aluminum, silver, iron, nickel, zinc and magnesium cathions. Its function is as follows. Exo-inulinase involved in utilization of the plant storage polymer inulin, consisting of fructooligosaccharides with a degree of polymerization (DP) value from 2 to 60. Splits off terminal fructose units successively from the non-reducing end of the inulin molecule, and also hydrolyze sucrose and raffinose. The chain is Extracellular exo-inulinase inuE (exoI) from Aspergillus ficuum.